Reading from the N-terminus, the 315-residue chain is BTB/POZ domain-containing adapter for CUL3-mediated RhoA degradation protein 3 (315 aa).

N-acetylmethionine is present on methionine 1. Serine 23 carries the phosphoserine modification. The 69-residue stretch at 32-100 (KYVKLNVGGA…LRDGGVPLPE (69 aa)) folds into the BTB domain. The short motif at 239-245 (QTKVEFP) is the PCNA-binding element. The segment at 269–294 (NALLEATGGAAGRSHHLDEDEERERE) is disordered.

The protein belongs to the BACURD family. In terms of assembly, homotetramer; forms a two-fold symmetric tetramer in solution. Interacts with CUL3; interaction is direct and forms a 5:5 heterodecamer. Component of the BCR(BACURD3) E3 ubiquitin ligase complex, at least composed of CUL3, KCTD10/BACURD3 and RBX1. Interacts with DNA polymerase delta subunit 2/POLD2. Interacts with PCNA. Associated with the tectonic-like complex (also named B9 complex); however as Kctd10 has not been identified in all tectonic-like complexes purifications it is unclear whether it is really part of the complex.

The protein resides in the nucleus. Its pathway is protein modification; protein ubiquitination. In terms of biological role, substrate-specific adapter of a BCR (BTB-CUL3-RBX1) E3 ubiquitin-protein ligase complex. The BCR(BACURD3) E3 ubiquitin ligase complex mediates the ubiquitination of target proteins, leading to their degradation by the proteasome. The polypeptide is BTB/POZ domain-containing adapter for CUL3-mediated RhoA degradation protein 3 (Kctd10) (Mus musculus (Mouse)).